The following is a 241-amino-acid chain: Large ribosomal subunit protein uL2 (241 aa).

The segment at 200–241 (AVDHPHGGGNRQHPGRPTTISRHAPAGRKVGSIAAKRTGKRR) is disordered.

It belongs to the universal ribosomal protein uL2 family. Part of the 50S ribosomal subunit. Forms a bridge to the 30S subunit in the 70S ribosome.

One of the primary rRNA binding proteins. Required for association of the 30S and 50S subunits to form the 70S ribosome, for tRNA binding and peptide bond formation. It has been suggested to have peptidyltransferase activity; this is somewhat controversial. Makes several contacts with the 16S rRNA in the 70S ribosome. This Methanosphaera stadtmanae (strain ATCC 43021 / DSM 3091 / JCM 11832 / MCB-3) protein is Large ribosomal subunit protein uL2.